Reading from the N-terminus, the 341-residue chain is Ketol-acid reductoisomerase (NADP(+)) (341 aa).

The KARI N-terminal Rossmann domain occupies valine 2–threonine 181. NADP(+) contacts are provided by residues tyrosine 25–glutamine 28, arginine 48, serine 52, and aspartate 82–glutamine 85. Residue histidine 107 is part of the active site. Residue glycine 133 participates in NADP(+) binding. Positions threonine 182–valine 327 constitute a KARI C-terminal knotted domain. Residues aspartate 190, glutamate 194, glutamate 226, and glutamate 230 each coordinate Mg(2+). Serine 251 is a substrate binding site.

This sequence belongs to the ketol-acid reductoisomerase family. It depends on Mg(2+) as a cofactor.

It carries out the reaction (2R)-2,3-dihydroxy-3-methylbutanoate + NADP(+) = (2S)-2-acetolactate + NADPH + H(+). The catalysed reaction is (2R,3R)-2,3-dihydroxy-3-methylpentanoate + NADP(+) = (S)-2-ethyl-2-hydroxy-3-oxobutanoate + NADPH + H(+). Its pathway is amino-acid biosynthesis; L-isoleucine biosynthesis; L-isoleucine from 2-oxobutanoate: step 2/4. The protein operates within amino-acid biosynthesis; L-valine biosynthesis; L-valine from pyruvate: step 2/4. Its function is as follows. Involved in the biosynthesis of branched-chain amino acids (BCAA). Catalyzes an alkyl-migration followed by a ketol-acid reduction of (S)-2-acetolactate (S2AL) to yield (R)-2,3-dihydroxy-isovalerate. In the isomerase reaction, S2AL is rearranged via a Mg-dependent methyl migration to produce 3-hydroxy-3-methyl-2-ketobutyrate (HMKB). In the reductase reaction, this 2-ketoacid undergoes a metal-dependent reduction by NADPH to yield (R)-2,3-dihydroxy-isovalerate. The polypeptide is Ketol-acid reductoisomerase (NADP(+)) (Anoxybacillus flavithermus (strain DSM 21510 / WK1)).